A 423-amino-acid chain; its full sequence is Protein CLP1 homolog (423 aa).

ATP contacts are provided by residues E16, K57, and D119–T124.

This sequence belongs to the Clp1 family. Clp1 subfamily.

Its subcellular location is the nucleus. Required for endonucleolytic cleavage during polyadenylation-dependent pre-mRNA 3'-end formation. The protein is Protein CLP1 homolog (cbc) of Drosophila sechellia (Fruit fly).